Here is a 72-residue protein sequence, read N- to C-terminus: Mu-like prophage FluMu protein C (72 aa).

Positions N35–R55 form a DNA-binding region, H-T-H motif.

The protein belongs to the c/mor transcriptional regulatory family.

Its function is as follows. Required for transcription of the phage late genes. In Haemophilus influenzae (strain ATCC 51907 / DSM 11121 / KW20 / Rd), this protein is Mu-like prophage FluMu protein C.